Here is a 700-residue protein sequence, read N- to C-terminus: Polyphosphate kinase (700 aa).

Asn-45 is a binding site for ATP. Residues Arg-373 and Arg-403 each coordinate Mg(2+). The region spanning 428–462 is the PLD phosphodiesterase 1 domain; it reads PGMKIHAKLLLITRREEQGFVRYAHIGTGNFHERT. Residue His-433 is the Phosphohistidine intermediate of the active site. Tyr-466, Arg-562, and His-590 together coordinate ATP. Residues 585–615 form the PLD phosphodiesterase 2 domain; that stretch reads DRFLEHPRVLVVHNDGDPQVFISSADWMERN.

It belongs to the polyphosphate kinase 1 (PPK1) family. Mg(2+) serves as cofactor. In terms of processing, an intermediate of this reaction is the autophosphorylated ppk in which a phosphate is covalently linked to a histidine residue through a N-P bond.

The enzyme catalyses [phosphate](n) + ATP = [phosphate](n+1) + ADP. Functionally, catalyzes the reversible transfer of the terminal phosphate of ATP to form a long-chain polyphosphate (polyP). The polypeptide is Polyphosphate kinase (Vibrio vulnificus (strain YJ016)).